A 33-amino-acid polypeptide reads, in one-letter code: Photosystem II reaction center protein Psb30 (33 aa).

Residues valine 5–leucine 25 traverse the membrane as a helical segment.

The protein belongs to the Psb30/Ycf12 family. As to quaternary structure, PSII is composed of 1 copy each of membrane proteins PsbA, PsbB, PsbC, PsbD, PsbE, PsbF, PsbH, PsbI, PsbJ, PsbK, PsbL, PsbM, PsbT, PsbX, PsbY, PsbZ, Psb30/Ycf12, peripheral proteins of the oxygen-evolving complex and a large number of cofactors. It forms dimeric complexes.

It is found in the plastid. It localises to the chloroplast thylakoid membrane. Functionally, a core subunit of photosystem II (PSII), probably helps stabilize the reaction center. The protein is Photosystem II reaction center protein Psb30 of Pinus koraiensis (Korean pine).